The chain runs to 1415 residues: G8 domain-containing protein DDB_G0278975 (1415 aa).

Positions 1-24 (MKINKIILFFFLSCLYLFSSSVSA) are cleaved as a signal peptide. 2 helical membrane-spanning segments follow: residues 107–127 (INLN…GLFT) and 138–158 (LLFI…SIKI). N-linked (GlcNAc...) asparagine glycosylation is found at Asn245, Asn366, Asn428, Asn466, and Asn579. A G8 domain is found at 566–692 (STWPNGIIPS…YHNTWSKLSA (127 aa)). PbH1 repeat units follow at residues 819-841 (LKNS…TIHG) and 842-864 (TNNV…YLED). N-linked (GlcNAc...) asparagine glycosylation is found at Asn844, Asn985, Asn1009, Asn1023, Asn1099, Asn1244, and Asn1342.

The protein belongs to the comF family.

The protein resides in the membrane. In Dictyostelium discoideum (Social amoeba), this protein is G8 domain-containing protein DDB_G0278975.